The primary structure comprises 213 residues: Thiamine-phosphate synthase (213 aa).

4-amino-2-methyl-5-(diphosphooxymethyl)pyrimidine is bound by residues 40–44 (QFREK) and N75. Residues D76 and D95 each coordinate Mg(2+). S113 is a binding site for 4-amino-2-methyl-5-(diphosphooxymethyl)pyrimidine. 139–141 (TPS) is a binding site for 2-[(2R,5Z)-2-carboxy-4-methylthiazol-5(2H)-ylidene]ethyl phosphate. K142 provides a ligand contact to 4-amino-2-methyl-5-(diphosphooxymethyl)pyrimidine. Residues G171 and 191–192 (IS) contribute to the 2-[(2R,5Z)-2-carboxy-4-methylthiazol-5(2H)-ylidene]ethyl phosphate site.

This sequence belongs to the thiamine-phosphate synthase family. Mg(2+) serves as cofactor.

It carries out the reaction 2-[(2R,5Z)-2-carboxy-4-methylthiazol-5(2H)-ylidene]ethyl phosphate + 4-amino-2-methyl-5-(diphosphooxymethyl)pyrimidine + 2 H(+) = thiamine phosphate + CO2 + diphosphate. It catalyses the reaction 2-(2-carboxy-4-methylthiazol-5-yl)ethyl phosphate + 4-amino-2-methyl-5-(diphosphooxymethyl)pyrimidine + 2 H(+) = thiamine phosphate + CO2 + diphosphate. The enzyme catalyses 4-methyl-5-(2-phosphooxyethyl)-thiazole + 4-amino-2-methyl-5-(diphosphooxymethyl)pyrimidine + H(+) = thiamine phosphate + diphosphate. Its pathway is cofactor biosynthesis; thiamine diphosphate biosynthesis; thiamine phosphate from 4-amino-2-methyl-5-diphosphomethylpyrimidine and 4-methyl-5-(2-phosphoethyl)-thiazole: step 1/1. In terms of biological role, condenses 4-methyl-5-(beta-hydroxyethyl)thiazole monophosphate (THZ-P) and 2-methyl-4-amino-5-hydroxymethyl pyrimidine pyrophosphate (HMP-PP) to form thiamine monophosphate (TMP). This Staphylococcus aureus (strain JH1) protein is Thiamine-phosphate synthase.